A 752-amino-acid polypeptide reads, in one-letter code: MAP/microtubule affinity-regulating kinase 4 (752 aa).

The interval 1–36 is disordered; the sequence is MSSRTALAPGNDRNSDTHGTLGSGRSSDKGPSWSSR. In terms of domain architecture, Protein kinase spans 59-310; the sequence is YRLLRTIGKG…LEQIMKDKWI (252 aa). Residues 65 to 73 and Lys88 contribute to the ATP site; that span reads IGKGNFAKV. Catalysis depends on Asp181, which acts as the Proton acceptor. Residue Thr214 is modified to Phosphothreonine; by LKB1. The region spanning 324–368 is the UBA domain; the sequence is EPEEDFGDTKRIEVMVGMGYTREEIKEALTNQKYNEVTATYLLLG. The interval 385 to 615 is disordered; the sequence is ARVRAPSDTT…SGRPRPTTNL (231 aa). The segment covering 391-406 has biased composition (low complexity); it reads SDTTNGTSSSKGSSHN. Phosphoserine occurs at positions 423 and 543. The segment covering 544–553 has biased composition (low complexity); sequence PSSHSLAPPS. Positions 703–752 constitute a KA1 domain; sequence AGGPEPLSHFEVEVCQLPRPGLRGVLFRRVAGTALAFRTLVTRISNDLEL.

The protein belongs to the protein kinase superfamily. CAMK Ser/Thr protein kinase family. SNF1 subfamily. Interacts with MAPT/TAU. Interacts with gamma-tubulin. Interacts with ODF2. Interacts with USP9X. Interacts with YWHAQ. Interacts with NLRP3; promoting NLRP3 recruitment to microtubule organizing center (MTOC). The cofactor is Mg(2+). In terms of processing, ubiquitinated with 'Lys-29'- and 'Lys-33'-linked polyubiquitins which appear to impede LKB1-mediated phosphorylation. Deubiquitinated by USP9X. Phosphorylated at Thr-214 by STK11/LKB1 in complex with STE20-related adapter-alpha (STRADA) pseudo kinase and CAB39. Phosphorylated throughout the cell cycle. Isoform 1 and isoform 2 show similar expression patterns in the central nervous system and are present in the same subsets of neurons including pyramidal and non-pyramidal neurons in the cerebral cortex and hippocampus, cerebellar Purkinje cells, and interneurons and motor neurons in the spinal cord but not in glial cells (at protein level). Isoform 2 is the major isoform in brain and cerebellum. Also expressed in spleen, liver, small intestine, colon, kidney, tongue, testis and lung. Isoform 1 and isoform 2 are expressed at similar levels in heart.

It localises to the cytoplasm. The protein localises to the cytoskeleton. The protein resides in the microtubule organizing center. Its subcellular location is the centrosome. It is found in the cilium axoneme. It localises to the cilium basal body. The protein localises to the cell projection. The protein resides in the dendrite. The catalysed reaction is L-seryl-[protein] + ATP = O-phospho-L-seryl-[protein] + ADP + H(+). It catalyses the reaction L-threonyl-[protein] + ATP = O-phospho-L-threonyl-[protein] + ADP + H(+). Activated by phosphorylation on Thr-214. Its function is as follows. Serine/threonine-protein kinase. Phosphorylates the microtubule-associated protein MAPT/TAU. Also phosphorylates the microtubule-associated proteins MAP2 and MAP4. Involved in regulation of the microtubule network, causing reorganization of microtubules into bundles. Required for the initiation of axoneme extension during cilium assembly. Regulates the centrosomal location of ODF2 and phosphorylates ODF2 in vitro. Plays a role in cell cycle progression, specifically in the G1/S checkpoint. Reduces neuronal cell survival. Plays a role in energy homeostasis by regulating satiety and metabolic rate. Promotes adipogenesis by activating JNK1 and inhibiting the p38MAPK pathway, and triggers apoptosis by activating the JNK1 pathway. Phosphorylates mTORC1 complex member RPTOR and acts as a negative regulator of the mTORC1 complex, probably due to disruption of the interaction between phosphorylated RPTOR and the RRAGA/RRAGC heterodimer which is required for mTORC1 activation. Involved in NLRP3 positioning along microtubules by mediating NLRP3 recruitment to microtubule organizing center (MTOC) upon inflammasome activation. The protein is MAP/microtubule affinity-regulating kinase 4 of Mus musculus (Mouse).